The sequence spans 199 residues: uncharacterized protein (199 aa).

Positions 1 to 30 (MEDAAAPGRTEGVLERQGAPPAAGQGGALV) are disordered. Residues 71–101 (RANATNKLTVIAEQIQHLQEQARKVLEDAHR) are a coiled coil.

This is an uncharacterized protein from Homo sapiens (Human).